A 237-amino-acid chain; its full sequence is Protein CUSTOS (237 aa).

Disordered stretches follow at residues 1–23 (MAAP…LDRF), 50–69 (LRVR…TTPE), and 97–237 (ISKA…LGNE). Over residues 52–62 (VRPDCHEHDGN) the composition is skewed to basic and acidic residues. Polar residues predominate over residues 162–177 (STLQQEPQSTPSNVCD). Residues 181–190 (PKKKRKKKKK) are compositionally biased toward basic residues. The short motif at 182–190 (KKKRKKKKK) is the Nucleolar localization signal (NLS1) element. Composition is skewed to basic and acidic residues over residues 203–216 (ETMH…ELQA) and 225–237 (KLEM…LGNE). Positions 217 to 225 (KRKKKKKQK) match the Nucleolar localization signal (NLS2) motif.

The protein belongs to the CUSTOS family. As to quaternary structure, interacts (via NLS1 and NLS2) with dvl2; the interaction is negatively regulated by Wnt stimulation. Interacts with csnk1a1. Interacts with ctnnb1; the interaction is positively regulated by Wnt stimulation. In terms of processing, phosphorylated by ck1/csnk1a1.

The protein resides in the nucleus envelope. Functionally, essential for Spemann-Mangold organizer formation and subsequent anterior head development in the embryo. Inhibits canonical Wnt signaling pathway by antagonizing nuclear import of beta-catenin (ctnnb1) during embryogenesis. This Xenopus laevis (African clawed frog) protein is Protein CUSTOS.